Reading from the N-terminus, the 169-residue chain is Endoribonuclease YbeY (169 aa).

The Zn(2+) site is built by histidine 126, histidine 130, and histidine 136.

Belongs to the endoribonuclease YbeY family. The cofactor is Zn(2+).

It localises to the cytoplasm. Single strand-specific metallo-endoribonuclease involved in late-stage 70S ribosome quality control and in maturation of the 3' terminus of the 16S rRNA. This chain is Endoribonuclease YbeY, found in Bradyrhizobium sp. (strain BTAi1 / ATCC BAA-1182).